Consider the following 163-residue polypeptide: Transcription elongation factor GreB (163 aa).

Residues 54–76 (GKRRMREIDRRIRFLTKRLEAAV) adopt a coiled-coil conformation.

This sequence belongs to the GreA/GreB family. GreB subfamily.

Its function is as follows. Necessary for efficient RNA polymerase transcription elongation past template-encoded arresting sites. The arresting sites in DNA have the property of trapping a certain fraction of elongating RNA polymerases that pass through, resulting in locked ternary complexes. Cleavage of the nascent transcript by cleavage factors such as GreA or GreB allows the resumption of elongation from the new 3'terminus. GreB releases sequences of up to 9 nucleotides in length. The sequence is that of Transcription elongation factor GreB from Neisseria meningitidis serogroup A / serotype 4A (strain DSM 15465 / Z2491).